We begin with the raw amino-acid sequence, 2344 residues long: MYSQHELRNKVSLALSSLLRYTFELTPFFELYEADFAYALYAGFELATNRKVVGKFSFQNVHLENEYNILTEIAKDERASKFSPTPIEFTSFPHIDLSACIAYDFGHGAELSTSYAYFRENPAEFVRFCIAICKCIEYLHSKGMVHGEIRLDSFIPISSYDNVYMLTVGSGASYFHNCLQAHNWRKYSEDSESMSRILFISPEQTGRTSYSVGYRTDIYSLGVLFFHYLSDCSPYTGSFVQRIRSILTEPLPDISKSCPKLPHLIFKIIEKMTRKNPDERYTSCSGIVNDLEACLDDIDKGLILNDHVLEKTGRTSLFYLPCSIYGREHEIKLIRKILRNSPRAINHQDKKDLETFNPYYLNAIESESSSQSLSLSQRASEVMPLVILITGCEGIGESSLIQTICDRREGYMAITKFEVSQSIVYSAIVSAVAEFIRQILAEDQLLLNNFFEELKNKLESDLYLLDSVFDLVPEIRSLLQQFSTSSGNTRKTSLLGSNHSSYSDKLGSPTILSTSFSLARPYPEPALVSPSTERPPRSSFSAALMTLLNIIASFKKVTMVIENIHLADESSLIILQKIVYSDLPLTLMITCDKENDHVINRFRLANDRIHEIELKPLSFNAVNSYVQATLHRTDDGLARFSSYVYHISKGVPLLVRNVLLSIYENKIIYFDWKKNRWEVNYDEMYTLDNDYSEPDAFMTAKKKISKLNDSSRAILGWASLLGPSFSFATVKKLCKDTDNIELNVEALQSALREGIIYATSSDDTYTFSRSIYVKAMRDLLNEAKIQIMHACLIDVCLKNRDRYNIFDIAFHINAAFDFVKGDKRSVEYCHYLHLAAEEALKIGANQEALDLYNRCIKMIPHEIPEESDDSYIRCQLIGMYVGCAEAYWVNDNFDTASEMLKLAEEKACNNSEVFPARFLYSRILFEGVHIEECTQYVLSCLKPLGYELKRHSLEDSKSIISALIPRIIDKITKSSEESQSSTDDDDRRIFEILSFLYVGSVATSYFSETAEMAIDFGIAQVEFFLSTVVNSFSAFALVYFAILANSLLEPSEDILFIGNYGEKLNREAENPIIFSRTEYLYVQSLGFIDSTTKERRLTIDYLDRNCVTCSDKHVIISLLLVSSWEKFLTSNNYSNYLADFETTHAQIMEMKPWVGDTSLITQLKRFLMCLQDNIKLDLIKSKSFLSDHNIQLSSPAAQESAKLAFSLHGWINSWYLLALVMHGEWDMAISYGENFKREFKNALLTSSRVFGIFMFTWSLVNKMLICPEFTKQKKYYEQYKENLGFFDSLCIGDNECITRVYFLLLKACGLIMNGLNFEASVMLEEVISLTEKLELFLLQAFAFETVGSIFVSMELYTSATQYLEEAIRNYAALGVKQKARHLRDKFGDLLVSNNLQVSIDEATQTDFPLVFSPERSSIDINASSMRSEKASFEIPFPEEQIDDDVSPVAQDSSLEELLISLDIIDLTSVMRSCQTIASEIELTGLLSTMTQRMLEDSSANAAVIAIRDDVGFKIAAYRTGELNEVFAPPMPITEDQTYVPSRVINYVVHTQKALFSNNINHEFDLQQERWNIENHMGRSVIAIPLYQKKEVFAILYLQGPPSAFHSRHMSVLSILGAQASFAIVNISLFHKVKEATNVNTIIIKAQREALNLVQKSEAKYRSFVDTMPCLLSKLEFDEELRIELFGSFWKEYCGELNINDPNTWKEYVHLDDHLKLQDFLLSHLHNPLPFELEIRIKRKDGVYRWNLTRCTPTTNEKNRTSFLCATIDIDDQKKARATALELARLRSNFLANISHELRTPFSGFYGMLSLLDDTNLDSEQRDIVSAARISCEMLLRVINDLLNFSKLEAGKVTLESDLEFSLESVVCDCMQSVYSACAEKGINLSYNVSPDIPFFTAGDGMKIGQMLKSILDNSVKTVNNGFIRVRAFLAGSSKKNDRDQLQIAFIVEDTREESNAIFLANMINSLNRGCNDYLPMDLSGTALGMSTCLQLCKIMGGSVSVEVSQNNPTFKICYDLKIHELGKERYDIIATPLFQNLTEFNDLIKSKVAIRVSKTSTEYDNITTYLQAARKVLHVFKGLQDLASIFDLSPDSALLRCSVVVVDVYSMDDVKAVEKILKSYPDVHVIYLCCDPSRLNIEQELQKPSGRSFACKKRWGFLQMPCTRENFLKVTLQVFKSNEDTCNFYSYVNEYGESPKPDDDMDRLNKCVGSKILIAEDNPIVRMTLKKQLEHLGMDVDAAEDGKETLQIFESHPDNYYQVCFVDYHMPVYDGLEVTRRMRKIERKHGCAPLPIFALTADMQPTMETQFQEVGITHYLSKPFKKETLIKMLLQYLVNGTDGNANTS.

Positions 1–295 (MYSQHELRNK…GIVNDLEACL (295 aa)) constitute a Protein kinase domain. Phosphoserine occurs at positions 12, 16, and 17. Residues 486-503 (SGNTRKTSLLGSNHSSYS) are compositionally biased toward polar residues. The disordered stretch occupies residues 486–506 (SGNTRKTSLLGSNHSSYSDKL). 2 TPR repeats span residues 829–862 (CHYL…IPHE) and 1340–1373 (AFAF…YAAL). The region spanning 1730–1781 (FELEIRIKRKDGVYRWNLTRCTPTTNEKNRTSFLCATIDIDDQKKARATALE) is the PAC domain. The 227-residue stretch at 1792–2018 (NISHELRTPF…TFKICYDLKI (227 aa)) folds into the Histidine kinase domain. His1795 is subject to Phosphohistidine; by autocatalysis. Residues 2211–2333 (KILIAEDNPI…TLIKMLLQYL (123 aa)) enclose the Response regulatory domain. Asp2263 is subject to 4-aspartylphosphate.

The protein localises to the cytoplasm. The catalysed reaction is ATP + protein L-histidine = ADP + protein N-phospho-L-histidine.. Functionally, involved in the control of the SAPK-dependent transcriptional response to peroxide stress. Regulates sty1 activity. The sequence is that of Peroxide stress-activated histidine kinase mak3 (mak3) from Schizosaccharomyces pombe (strain 972 / ATCC 24843) (Fission yeast).